A 2512-amino-acid chain; its full sequence is Isonitrile lipopeptide synthase (2512 aa).

2 consecutive Carrier domains span residues 935–1003 (AAGL…PTPD) and 1984–2059 (APAG…GRDA). O-(pantetheine 4'-phosphoryl)serine is present on residues Ser963 and Ser2019. One can recognise a Thioester reductase (TE) domain in the interval 2112-2372 (LTGATGFLGR…LPVTFVAEAI (261 aa)).

Belongs to the ATP-dependent AMP-binding enzyme family. Pantetheine 4'-phosphate is required as a cofactor.

It catalyses the reaction 2 a (3R)-3-isocyanyl-fatty acyl-[ACP] + L-lysine + ATP + 2 NADPH = an isonitrile lipopeptide + 2 holo-[ACP] + AMP + diphosphate + 2 NADP(+). Nonribosomal peptide synthetase (NRPS) involved in the biosynthesis of a unique class of isonitrile lipopeptides (INLPs) that seem to function as virulence factors in M.tuberculosis and to play a role in metal acquisition. Catalyzes the final step in the pathway, i.e. the condensation of a (3R)-3-isocyanyl-fatty acyl-[ACP] to both amino groups of a lysine, producing isonitrile lipopeptides. This is Isonitrile lipopeptide synthase from Mycobacterium tuberculosis (strain ATCC 25618 / H37Rv).